A 369-amino-acid polypeptide reads, in one-letter code: Ribosomal RNA large subunit methyltransferase G (369 aa).

Belongs to the methyltransferase superfamily. RlmG family.

It is found in the cytoplasm. It catalyses the reaction guanosine(1835) in 23S rRNA + S-adenosyl-L-methionine = N(2)-methylguanosine(1835) in 23S rRNA + S-adenosyl-L-homocysteine + H(+). Specifically methylates the guanine in position 1835 (m2G1835) of 23S rRNA. The chain is Ribosomal RNA large subunit methyltransferase G from Magnetococcus marinus (strain ATCC BAA-1437 / JCM 17883 / MC-1).